The sequence spans 572 residues: Cell cycle protein kinase DBF2 (572 aa).

3 positions are modified to phosphoserine: S17, S20, and S74. The region spanning 177 to 477 is the Protein kinase domain; the sequence is FEMITQVGQG…FEHVKRMSYF (301 aa). ATP contacts are provided by residues 183 to 191 and K206; that span reads VGQGGYGQV. D300 (proton acceptor) is an active-site residue. S374 is subject to Phosphoserine; by CDC15. The 78-residue stretch at 478–555 folds into the AGC-kinase C-terminal domain; it reads ADINFSTLRS…RHRNGKQGSS (78 aa). Position 544 is a phosphothreonine; by CDC15 (T544).

The protein belongs to the protein kinase superfamily. Ser/Thr protein kinase family. As to quaternary structure, interacts with MOB1. MOB1-binding is required for a late mitotic event. Phosphorylation of Ser-374 and Thr-544 by CDC15 is essential for activation of DBF2 kinase activity.

Its subcellular location is the cytoplasm. The protein resides in the cytoskeleton. It localises to the microtubule organizing center. The protein localises to the spindle pole body. It is found in the bud neck. Its subcellular location is the nucleus. The enzyme catalyses L-seryl-[protein] + ATP = O-phospho-L-seryl-[protein] + ADP + H(+). The catalysed reaction is L-threonyl-[protein] + ATP = O-phospho-L-threonyl-[protein] + ADP + H(+). With respect to regulation, kinase activity is regulated by BUB2, CDC15 and CDC5, and is maximal during nuclear division. CDK1 kinase inhibits cellular DBF2-MOB1 kinase activity via phosphorylation of both CDC15 and MOB1. In terms of biological role, ser/Thr-protein kinase involved in the mitotic exit network (MEN) and required after the metaphase to anaphase cell cycle transition. Phosphorylates CHS2 to regulate its dynamics and chitin synthesis at the division site during cytokinesis. Coordinates septin and actomyosin ring (AMR) functions during cytokinesis through the phosphorylation of HOF1. In complex with MOB1, phosphorylates CDC14 at sites adjacent to its nuclear localization sequence, thereby retaining CDC14 in the cytoplasm. Also binds to SWI5 and CLB2 mRNAs cotranscriptionally to regulate their decay. In the nucleus, the DBF2-MOB1 complex regulates passenger protein localization during anaphase. Mediates sorbic acid stress tolerance through promoting vacuolar H(+)-ATPase function, probably through phosphorylation of VMA1 and VMA2 subunits. In Saccharomyces cerevisiae (strain ATCC 204508 / S288c) (Baker's yeast), this protein is Cell cycle protein kinase DBF2 (DBF2).